We begin with the raw amino-acid sequence, 105 residues long: Phosphoribosyl-AMP cyclohydrolase (105 aa).

Aspartate 72 is a binding site for Mg(2+). Zn(2+) is bound at residue cysteine 73. Aspartate 74 and aspartate 76 together coordinate Mg(2+). Residues cysteine 89 and cysteine 96 each contribute to the Zn(2+) site.

The protein belongs to the PRA-CH family. In terms of assembly, homodimer. It depends on Mg(2+) as a cofactor. Zn(2+) serves as cofactor.

It is found in the cytoplasm. It catalyses the reaction 1-(5-phospho-beta-D-ribosyl)-5'-AMP + H2O = 1-(5-phospho-beta-D-ribosyl)-5-[(5-phospho-beta-D-ribosylamino)methylideneamino]imidazole-4-carboxamide. Its pathway is amino-acid biosynthesis; L-histidine biosynthesis; L-histidine from 5-phospho-alpha-D-ribose 1-diphosphate: step 3/9. Catalyzes the hydrolysis of the adenine ring of phosphoribosyl-AMP. In Listeria innocua serovar 6a (strain ATCC BAA-680 / CLIP 11262), this protein is Phosphoribosyl-AMP cyclohydrolase.